The following is a 306-amino-acid chain: Probable C-terminal domain small phosphatase (306 aa).

Residues 1 to 36 (MNSSPITQVSNPNDSLNHSSTNLIPSSHNSLNNYPQ) show a composition bias toward polar residues. Disordered stretches follow at residues 1–45 (MNSS…NRKK) and 61–116 (NDQN…NKDS). Residues 61–111 (NDQNNGNNINTDNGASNNDKLQQQKQYNQQQQQQYNQHQQQQQQQQQQQQY) show a composition bias toward low complexity. Residues 132–290 (RHVGLKTLVL…LDLLPLLDDL (159 aa)) form the FCP1 homology domain. Residue Asp142 is the 4-aspartylphosphate intermediate of the active site. 3 residues coordinate Mg(2+): Asp142, Asp144, and Asn253. The Proton donor role is filled by Asp144.

As to quaternary structure, monomer. It depends on Mg(2+) as a cofactor.

It is found in the nucleus. It carries out the reaction O-phospho-L-seryl-[protein] + H2O = L-seryl-[protein] + phosphate. It catalyses the reaction O-phospho-L-threonyl-[protein] + H2O = L-threonyl-[protein] + phosphate. Its function is as follows. May function as a phosphatase involved in the regulation of cell growth and differentiation. In Dictyostelium discoideum (Social amoeba), this protein is Probable C-terminal domain small phosphatase (fcpA).